The sequence spans 591 residues: MMRSHYCGQLNESLDGQEVTLCGWVHRRRDHGGVIFLDVRDREGLAQVVFDPDRAETFAKADRVRSEFVVKITGKVRLRPEGARNPNMASGSIEVLGYELEVLNQAETPPFPLDEYSDVGEETRLRYRFIDLRRPEMAAKLKLRARITSSIRRYLDDNGFLDVETPILGRPTPEGARDYLVPSRTYPGHFFALPQSPQLFKQLLMVAGFDRYYQIAKCFRDEDLRADRQPEFTQIDIETSFLDESDIIGITEKMVRQLFKEVLDVEFDEFPHMPFEEAMRRYGSDKPDLRIPLELVDVADQLKEVEFKVFSGPANDPKGRVAALRVPGAASMPRSQIDDYTKFVGIYGAKGLAYIKVNERAKGVEGLQSPIVKFIPEANLNVILDRVGAVDGDIVFFGADKAKIVCDALGALRIKVGHDLKLLTREWAPMWVVDFPMFEENDDGSLSALHHPFTSPKCTPAELEANPGAALSRAYDMVLNGTELGGGSIRIHDKSMQQAVFRVLGIDEAEQEEKFGFLLDALKYGAPPHGGLAFGLDRLVMLMTGASSIREVIAFPKTQSAGDVMTQAPGSVDGKALRELHIRLREQPKAE.

E174 serves as a coordination point for L-aspartate. The segment at 198-201 (QLFK) is aspartate. Residue R220 participates in L-aspartate binding. Residues 220-222 (RDE) and Q229 contribute to the ATP site. Position 450 (H450) interacts with L-aspartate. E483 provides a ligand contact to ATP. L-aspartate is bound at residue R490. 535–538 (GLDR) is an ATP binding site.

It belongs to the class-II aminoacyl-tRNA synthetase family. Type 1 subfamily. Homodimer.

The protein resides in the cytoplasm. It carries out the reaction tRNA(Asx) + L-aspartate + ATP = L-aspartyl-tRNA(Asx) + AMP + diphosphate. Aspartyl-tRNA synthetase with relaxed tRNA specificity since it is able to aspartylate not only its cognate tRNA(Asp) but also tRNA(Asn). Reaction proceeds in two steps: L-aspartate is first activated by ATP to form Asp-AMP and then transferred to the acceptor end of tRNA(Asp/Asn). The polypeptide is Aspartate--tRNA(Asp/Asn) ligase (Pseudomonas aeruginosa (strain LESB58)).